The chain runs to 185 residues: Probable calcium-binding protein CML10 (185 aa).

A disordered region spans residues M1–M41. EF-hand domains lie at T36 to A71, A72 to D107, A110 to K145, and A146 to F181. Positions 49, 51, 53, 55, 60, 85, 87, 89, 96, 123, 125, 127, 129, 134, 159, 161, 163, and 170 each coordinate Ca(2+).

Potential calcium sensor. The sequence is that of Probable calcium-binding protein CML10 (CML10) from Oryza sativa subsp. japonica (Rice).